The primary structure comprises 365 residues: tRNA/tmRNA (uracil-C(5))-methyltransferase (365 aa).

Residues Gln189, Tyr217, Asn222, Glu238, and Asp298 each contribute to the S-adenosyl-L-methionine site. Catalysis depends on Cys323, which acts as the Nucleophile. Glu357 (proton acceptor) is an active-site residue.

The protein belongs to the class I-like SAM-binding methyltransferase superfamily. RNA M5U methyltransferase family. TrmA subfamily.

It carries out the reaction uridine(54) in tRNA + S-adenosyl-L-methionine = 5-methyluridine(54) in tRNA + S-adenosyl-L-homocysteine + H(+). The catalysed reaction is uridine(341) in tmRNA + S-adenosyl-L-methionine = 5-methyluridine(341) in tmRNA + S-adenosyl-L-homocysteine + H(+). Dual-specificity methyltransferase that catalyzes the formation of 5-methyluridine at position 54 (m5U54) in all tRNAs, and that of position 341 (m5U341) in tmRNA (transfer-mRNA). The chain is tRNA/tmRNA (uracil-C(5))-methyltransferase from Pseudoalteromonas atlantica (strain T6c / ATCC BAA-1087).